A 310-amino-acid polypeptide reads, in one-letter code: uncharacterized protein (310 aa).

Positions 5 to 62 (FTEENLLAFTTAARFGSFSKAAEELGLTTSAISYTIKRMETGLDVVLFTRSTRSIELT) constitute an HTH lysR-type domain. The H-T-H motif DNA-binding region spans 22-42 (FSKAAEELGLTTSAISYTIKR).

The protein belongs to the LysR transcriptional regulatory family.

This is an uncharacterized protein from Escherichia coli (strain K12).